Reading from the N-terminus, the 341-residue chain is MVANPGGGSTDAGGGPVRHIPVLLAEVLAALAPAPGKLILDGTFGAGGYSSAILAAGAEVIALDRDPTAIAAGQAMVAAHGGRFKLVHSQFSHLADHAPQGGLDGVVLDIGVSSMQIDEAERGFSFQKNGPLDMRMSAEGVSAADVVNRAKVADLIRIFHFLGEESQAPRIAHAIEKRRAEKPFETTRDLAGLIELVTPRKMKDKIHPATRVFQALRIFVNDELGELAQALFAAEAALKPGGRLVAVTFHSLEDRIVKKFFSDRAGKASGSRHLPVAHERAATFAAIGKPMVSASEAEAEINPRARSAKLRAGLRTEAAAEAADMSLFGFPNLASLGKLGG.

Residues 47–49, Asp64, Phe91, Asp109, and Gln116 each bind S-adenosyl-L-methionine; that span reads GGY.

Belongs to the methyltransferase superfamily. RsmH family.

Its subcellular location is the cytoplasm. It catalyses the reaction cytidine(1402) in 16S rRNA + S-adenosyl-L-methionine = N(4)-methylcytidine(1402) in 16S rRNA + S-adenosyl-L-homocysteine + H(+). In terms of biological role, specifically methylates the N4 position of cytidine in position 1402 (C1402) of 16S rRNA. This chain is Ribosomal RNA small subunit methyltransferase H, found in Rhizobium leguminosarum bv. trifolii (strain WSM1325).